The primary structure comprises 299 residues: Ribosomal protein L11 methyltransferase (299 aa).

The S-adenosyl-L-methionine site is built by Thr-152, Gly-172, Asp-194, and Asn-234.

The protein belongs to the methyltransferase superfamily. PrmA family.

It is found in the cytoplasm. It carries out the reaction L-lysyl-[protein] + 3 S-adenosyl-L-methionine = N(6),N(6),N(6)-trimethyl-L-lysyl-[protein] + 3 S-adenosyl-L-homocysteine + 3 H(+). In terms of biological role, methylates ribosomal protein L11. The polypeptide is Ribosomal protein L11 methyltransferase (Geobacter sulfurreducens (strain ATCC 51573 / DSM 12127 / PCA)).